A 290-amino-acid chain; its full sequence is Elongation factor Ts (290 aa).

The segment at 82–85 is involved in Mg(2+) ion dislocation from EF-Tu; that stretch reads TDFV.

The protein belongs to the EF-Ts family.

The protein resides in the cytoplasm. Associates with the EF-Tu.GDP complex and induces the exchange of GDP to GTP. It remains bound to the aminoacyl-tRNA.EF-Tu.GTP complex up to the GTP hydrolysis stage on the ribosome. The chain is Elongation factor Ts from Thiobacillus denitrificans (strain ATCC 25259 / T1).